Consider the following 407-residue polypeptide: Ameloblastin (407 aa).

The N-terminal stretch at 1-26 is a signal peptide; the sequence is MSASKIPLFKMKGLILFLSLVKMSLA. Position 42 is a hydroxyproline (Pro42). Ser48 carries the phosphoserine modification. Disordered stretches follow at residues 124–143 and 259–304; these read GVQV…PGQL and QNSP…ENPA.

It belongs to the ameloblastin family. As to expression, ameloblast-specific.

It is found in the secreted. It localises to the extracellular space. Its subcellular location is the extracellular matrix. Functionally, involved in the mineralization and structural organization of enamel. The polypeptide is Ameloblastin (Ambn) (Mus musculus (Mouse)).